The primary structure comprises 93 residues: Small ribosomal subunit protein uS19 (93 aa).

This sequence belongs to the universal ribosomal protein uS19 family.

Protein S19 forms a complex with S13 that binds strongly to the 16S ribosomal RNA. This is Small ribosomal subunit protein uS19 from Frankia alni (strain DSM 45986 / CECT 9034 / ACN14a).